Consider the following 823-residue polypeptide: Adhesion G protein-coupled receptor E2 (823 aa).

An N-terminal signal peptide occupies residues 1-23 (MGGRVFLVFLAFCVWLTLPGAET). The Extracellular portion of the chain corresponds to 24-540 (QDSRGCARWC…EEDPVLTVIT (517 aa)). Positions 25 to 66 (DSRGCARWCPQDSSCVNATACRCNPGFSSFSEIITTPMETCD) constitute an EGF-like 1 domain. 15 disulfides stabilise this stretch: cysteine 29-cysteine 39, cysteine 33-cysteine 45, cysteine 47-cysteine 65, cysteine 71-cysteine 85, cysteine 79-cysteine 94, cysteine 96-cysteine 117, cysteine 123-cysteine 136, cysteine 130-cysteine 145, cysteine 147-cysteine 161, cysteine 167-cysteine 180, cysteine 174-cysteine 189, cysteine 191-cysteine 210, cysteine 216-cysteine 229, cysteine 223-cysteine 238, and cysteine 240-cysteine 259. An N-linked (GlcNAc...) asparagine glycan is attached at asparagine 41. Residues 67–118 (DINECATLSKVSCGKFSDCWNTEGSYDCVCSPGYEPVSGAKTFKNESENTCQ) enclose the EGF-like 2; calcium-binding domain. Residue asparagine 111 is glycosylated (N-linked (GlcNAc...) asparagine). The EGF-like 3; calcium-binding domain maps to 119–162 (DVDECQQNPRLCKSYGTCVNTLGSYTCQCLPGFKLKPEDPKLCT). Positions 163 to 211 (DVNECTSGQNPCHSSTHCLNNVGSYQCRCRPGWQPIPGSPNGPNNTVCE) constitute an EGF-like 4; calcium-binding domain. N-linked (GlcNAc...) asparagine glycosylation is present at asparagine 206. Residues 212–260 (DVDECSSGQHQCDSSTVCFNTVGSYSCRCRPGWKPRHGIPNNQKDTVCE) enclose the EGF-like 5; calcium-binding domain. N-linked (GlcNAc...) asparagine glycosylation is found at asparagine 298, asparagine 347, asparagine 354, asparagine 456, and asparagine 460. Residues 354–530 (NFSYPAGTEL…AVLMAHYDVQ (177 aa)) form the GAIN-B domain. 2 disulfide bridges follow: cysteine 482/cysteine 512 and cysteine 500/cysteine 514. The tract at residues 482–530 (CVFWEHGQNGCGHWATTGCSTIGTRDTSTICRCTHLSSFAVLMAHYDVQ) is GPS. The chain crosses the membrane as a helical span at residues 541-561 (YMGLSVSLLCLLLAALTFLLC). Over 562-569 (KAIQNTST) the chain is Cytoplasmic. The helical transmembrane segment at 570–590 (SLHLQLSLCLFLAHLLFLVAI) threads the bilayer. Residues 591–605 (DQTGHKVLCSIIAGT) are Extracellular-facing. A helical membrane pass occupies residues 606–626 (LHYLYLATLTWMLLEALYLFL). The Cytoplasmic portion of the chain corresponds to 627–644 (TARNLTVVNYSSINRFMK). The helical transmembrane segment at 645–665 (KLMFPVGYGVPAVTVAISAAS) threads the bilayer. At 666–683 (RPHLYGTPSRCWLQPEKG) the chain is on the extracellular side. Residues 684 to 704 (FIWGFLGPVCAIFSVNLVLFL) form a helical membrane-spanning segment. Over 705 to 735 (VTLWILKNRLSSLNSEVSTLRNTRMLAFKAT) the chain is Cytoplasmic. Residues 736 to 756 (AQLFILGCTWCLGILQVGPAA) form a helical membrane-spanning segment. At 757–760 (RVMA) the chain is on the extracellular side. Residues 761–781 (YLFTIINSLQGVFIFLVYCLL) form a helical membrane-spanning segment. The Cytoplasmic segment spans residues 782-823 (SQQVREQYGKWSKGIRKLKTESEMHTLSSSAKADTSKPSTVN).

Belongs to the G-protein coupled receptor 2 family. Adhesion G-protein coupled receptor (ADGR) subfamily. In terms of assembly, forms a heterodimer, consisting of a large extracellular region non-covalently linked to a seven-transmembrane moiety. Interacts with chondroitin sulfate; the interaction with chondroitin sulfate is calcium-dependent. Interacts with CD55. In terms of processing, autoproteolytically cleaved into 2 subunits, an extracellular alpha subunit and a seven-transmembrane beta subunit. Expression is restricted to myeloid cells. Highest expression was found in peripheral blood leukocytes, followed by spleen and lymph nodes, with intermediate to low levels in thymus, bone marrow, fetal liver, placenta, and lung, and no expression in heart, brain, skeletal muscle, kidney, or pancreas. Expression is also detected in monocyte/macrophage and Jurkat cell lines but not in other cell lines tested. High expression in mast cells.

The protein resides in the cell membrane. It localises to the cell projection. It is found in the ruffle membrane. Functionally, cell surface receptor that binds to the chondroitin sulfate moiety of glycosaminoglycan chains and promotes cell attachment. Promotes granulocyte chemotaxis, degranulation and adhesion. In macrophages, promotes the release of inflammatory cytokines, including IL8 and TNF. Signals probably through G-proteins. Is a regulator of mast cell degranulation. The sequence is that of Adhesion G protein-coupled receptor E2 from Homo sapiens (Human).